A 130-amino-acid chain; its full sequence is Phosphoribosyl-AMP cyclohydrolase (130 aa).

Asp77 contributes to the Mg(2+) binding site. Position 78 (Cys78) interacts with Zn(2+). Asp79 and Asp81 together coordinate Mg(2+). 2 residues coordinate Zn(2+): Cys95 and Cys102.

Belongs to the PRA-CH family. In terms of assembly, homodimer. The cofactor is Mg(2+). Zn(2+) serves as cofactor.

The protein resides in the cytoplasm. The catalysed reaction is 1-(5-phospho-beta-D-ribosyl)-5'-AMP + H2O = 1-(5-phospho-beta-D-ribosyl)-5-[(5-phospho-beta-D-ribosylamino)methylideneamino]imidazole-4-carboxamide. The protein operates within amino-acid biosynthesis; L-histidine biosynthesis; L-histidine from 5-phospho-alpha-D-ribose 1-diphosphate: step 3/9. Catalyzes the hydrolysis of the adenine ring of phosphoribosyl-AMP. The chain is Phosphoribosyl-AMP cyclohydrolase from Pseudomonas putida (strain W619).